We begin with the raw amino-acid sequence, 233 residues long: MFAKTAAANLTKKGGLSLLSTTARRTKVTLPDLKWDFGALEPYISGQINELHYTKHHQTYVNGFNTAVDQFQELSDLLAKEPSPANARKMIAIQQNIKFHGGGFTNHCLFWENLAPESQGGGEPPTGALAKAIDEQFGSLDELIKLTNTKLAGVQGSGWAFIVKNLSNGGKLDVVQTYNQDTVTGPLVPLVAIDAWEHAYYLQYQNKKADYFKAIWNVVNWKEASRRFDAGKI.

The transit peptide at M1–T26 directs the protein to the mitochondrion. Residues H52 and H107 each coordinate Mn(2+). 2 positions are modified to phosphothreonine: T147 and T149. The Mn(2+) site is built by D194 and H198.

Belongs to the iron/manganese superoxide dismutase family. As to quaternary structure, homotetramer. Mn(2+) is required as a cofactor.

Its subcellular location is the mitochondrion matrix. It carries out the reaction 2 superoxide + 2 H(+) = H2O2 + O2. Destroys superoxide anion radicals which are normally produced within the cells and which are toxic to biological systems. This Saccharomyces cerevisiae (strain ATCC 204508 / S288c) (Baker's yeast) protein is Superoxide dismutase [Mn], mitochondrial (SOD2).